Here is a 487-residue protein sequence, read N- to C-terminus: Chromosomal replication initiator protein DnaA (487 aa).

Positions 1-92 (MTIKGGVVSQ…SELWTANDAT (92 aa)) are domain I, interacts with DnaA modulators. A domain II region spans residues 92-144 (TGRRLDLKSRLEFESVGGAGYEAKAEPIEIVLPVSSDVPALAPTNGSKPSPVQ). Positions 145-367 (GLQERFTFDT…GALNTLSARA (223 aa)) are domain III, AAA+ region. The ATP site is built by G189, G191, K192, and T193. Positions 368–487 (GEGVSRLTLE…LETITRKLRG (120 aa)) are domain IV, binds dsDNA.

Belongs to the DnaA family. Oligomerizes as a right-handed, spiral filament on DNA at oriC.

It localises to the cytoplasm. Its function is as follows. Plays an essential role in the initiation and regulation of chromosomal replication. ATP-DnaA binds to the origin of replication (oriC) to initiate formation of the DNA replication initiation complex once per cell cycle. Binds the DnaA box (a 9 base pair repeat at the origin) and separates the double-stranded (ds)DNA. Forms a right-handed helical filament on oriC DNA; dsDNA binds to the exterior of the filament while single-stranded (ss)DNA is stabiized in the filament's interior. The ATP-DnaA-oriC complex binds and stabilizes one strand of the AT-rich DNA unwinding element (DUE), permitting loading of DNA polymerase. After initiation quickly degrades to an ADP-DnaA complex that is not apt for DNA replication. Binds acidic phospholipids. This Caulobacter sp. (strain K31) protein is Chromosomal replication initiator protein DnaA.